A 607-amino-acid polypeptide reads, in one-letter code: MEAIRIGFGLPNVHSVPLCLTTTRCLFPRQRLLHSHTPSWKPAKQQDFFVASSSKKSSDDLESSLPTPHFSPSLWGDHFLSVSLNRAEFDELEREIETTKPLARDKLMSSESSDKEKIRLIHLLVSMGISYHFDKEIQDILKHSFTKLDDIIVGEDDLETISIMFEVFKLYGHKMSCDAFDRFRGNDGRFKESLVRDFRGMLQLFEVAHLGTPCEVIMDEALSFTRNHLESLTSGNASTASPHLLKHIQNSLYIPRYCNIEVLVAREYISYYEQEEGHDEILLKFAKLNFNFCQFHYVQELKTLTKWWRDLDLASKLPYIRDRLVESHLVALGPYFEPHYSLGRIIVAKINMIMVVVDDTYDAYATLPQVKALTECLQRWSIEVSDKLPDYLRIVLGSLFDVMGEIEREMRPLGRLYRVKQVVEKIKIITKAYQEIAKWARTGHVSTFDEYMKVGVLTAGMADYAAYCFIGMEDINEKEAFEWLNSNPLIIKHLTAMFRLANDVGTYETEINRGEVANGLNCYMKQYGVTKEEASRELRKMYVYRKKVVVEEFMNSHDHVPRQVLLRCLNIARIFDVFYTEGDGYSEPKGKIEHFMTSLYLHPIPLS.

Residues Asp358, Asp362, Asn502, Thr506, and Glu510 each coordinate Mg(2+). Residues 358–362 (DDTYD) carry the DDXXD motif motif.

This sequence belongs to the terpene synthase family. Tpsa subfamily. It depends on Mg(2+) as a cofactor. The cofactor is Mn(2+). In terms of tissue distribution, predominantly expressed in flowers but also in siliques, roots, leaves and stems.

The protein localises to the cytoplasm. It functions in the pathway secondary metabolite biosynthesis; terpenoid biosynthesis. This chain is Terpenoid synthase 29 (TPS29), found in Arabidopsis thaliana (Mouse-ear cress).